The primary structure comprises 160 residues: Transcription elongation factor GreA (160 aa).

A coiled-coil region spans residues 49–75 (SEYDEAKNDQAFTEGKILQLENKLKNA).

Belongs to the GreA/GreB family.

Its function is as follows. Necessary for efficient RNA polymerase transcription elongation past template-encoded arresting sites. The arresting sites in DNA have the property of trapping a certain fraction of elongating RNA polymerases that pass through, resulting in locked ternary complexes. Cleavage of the nascent transcript by cleavage factors such as GreA or GreB allows the resumption of elongation from the new 3'terminus. GreA releases sequences of 2 to 3 nucleotides. In Clostridium botulinum (strain Alaska E43 / Type E3), this protein is Transcription elongation factor GreA.